The primary structure comprises 560 residues: MLSLLGATTLMLVAGRWVLPAASGEANLKSENVEIHIIDDNFFLKWNSSSESVRNVTFSADYQILGTDNWKKLPGCQHITSSKCNFSSVELKDVFEKIELRIRAEEGNNTSTWYEVEPFVPFLKAQIGPPDVHLEAEDKAIILSISPPGTEDSIMWALDRSSFRYSVVIWKNSSSLEERTETVYPEDKIYKLSPEITYCLKVKAELRLQSRVGCYSPVYCINTTERHKVPSPENVQINVDNQAYVLKWDYPYESTTFQAQWLRAFLKKIPGKHSNKWKQIPNCENVTTTHCVFPRDIFSMGIYYVRVRASNGNGTSFWSEEKEFNTEVKPIIFPPVISMKSITDDSLHVSVSASEESENMSVNQLYPLVYEVIFWENTSNAERKVLEKRTDFTFPNLKPLTVYCVKARALIENDRWNKGSSYSDTVCEKTKPGNTSKTWLIAGICTALFSILVVIYVVRVFLRCVKYVFFPSSKPPSSVDQYFSDQPLRNLLLSTSEEQTERCFIIENASIITEIEETNEVAEVHEEYNSQASQDSGNYSNEDENSGSKISEEFLQQDSV.

Residues 1–24 (MLSLLGATTLMLVAGRWVLPAASG) form the signal peptide. Residues 25–437 (EANLKSENVE…EKTKPGNTSK (413 aa)) lie on the Extracellular side of the membrane. Asn-47 and Asn-55 each carry an N-linked (GlcNAc...) asparagine glycan. Residues Cys-76 and Cys-84 are joined by a disulfide bond. Residues Asn-85, Asn-108, Asn-109, and Asn-172 are each glycosylated (N-linked (GlcNAc...) asparagine). Fibronectin type-III domains follow at residues 126-226 (QIGP…TTER), 231-329 (SPEN…TEVK), and 333-433 (FPPV…TKPG). Cys-199 and Cys-220 are disulfide-bonded. Asn-222, Asn-285, Asn-313, Asn-359, and Asn-377 each carry an N-linked (GlcNAc...) asparagine glycan. A disulfide bridge links Cys-283 with Cys-291. A disulfide bridge links Cys-404 with Cys-427. Asn-434 carries N-linked (GlcNAc...) asparagine glycosylation. A helical membrane pass occupies residues 438 to 458 (TWLIAGICTALFSILVVIYVV). Residues 459–560 (RVFLRCVKYV…SEEFLQQDSV (102 aa)) are Cytoplasmic-facing. Residue Cys-464 is the site of S-palmitoyl cysteine attachment. 2 positions are modified to phosphotyrosine; by TYK2: Tyr-467 and Tyr-482. The important for interaction with TYK2 stretch occupies residues 492–501 (LLSTSEEQTE). Ser-496 and Ser-536 each carry phosphoserine. Residues 524–560 (VHEEYNSQASQDSGNYSNEDENSGSKISEEFLQQDSV) are disordered. Polar residues predominate over residues 529-540 (NSQASQDSGNYS).

Belongs to the type II cytokine receptor family. In terms of assembly, heterodimer with IFNAR2; forming the receptor for type I interferon. Interacts with TYK2. Interacts with STAT1 and STAT2; the interaction requires its phosphorylation at Tyr-482. Interacts (serine-phosphorylated form) with FBXW11, the substrate recognition component of a SCF (SKP1-CUL1-F-box protein) E3 ubiquitin-protein ligase complex. Interacts with SHMT2; this promotes interaction with ABRAXAS2 and the BRISC complex. Interacts with TRIM10; this interaction prevents association between IFNAR1 and TYK2. Ubiquitinated, leading to its internalization and degradation. Polyubiquitinated via 'Lys-48'-linked and 'Lys-63'-linked ubiquitin chains, leading to receptor internalization and lysosomal degradation. The 'Lys-63'-linked ubiquitin chains are cleaved off by the BRISC complex. In terms of processing, phosphorylated on tyrosine residues in response to interferon-binding: phosphorylation by TYK2 tyrosine kinase creates docking sites for STAT proteins. Phosphorylated on serine residues in response to interferon binding; this promotes interaction with FBXW11 and ubiquitination. Post-translationally, palmitoylation at Cys-464 is required for the activation of STAT1 and STAT2. Expressed in the endometrium. Expressed in all tissues examined except conceptus at day 15 of pregnancy.

It is found in the cell membrane. The protein resides in the late endosome. It localises to the lysosome. Its function is as follows. Together with IFNAR2, forms the heterodimeric receptor for type I interferons (including interferons alpha, beta, epsilon, omega and kappa). Type I interferon binding activates the JAK-STAT signaling cascade, resulting in transcriptional activation or repression of interferon-regulated genes that encode the effectors of the interferon response. Mechanistically, type I interferon-binding brings the IFNAR1 and IFNAR2 subunits into close proximity with one another, driving their associated Janus kinases (JAKs) (TYK2 bound to IFNAR1 and JAK1 bound to IFNAR2) to cross-phosphorylate one another. The activated kinases phosphorylate specific tyrosine residues on the intracellular domains of IFNAR1 and IFNAR2, forming docking sites for the STAT transcription factors. STAT proteins are then phosphorylated by the JAKs, promoting their translocation into the nucleus to regulate expression of interferon-regulated genes. Can also act independently of IFNAR2: form an active IFNB1 receptor by itself and activate a signaling cascade that does not involve activation of the JAK-STAT pathway. This is Interferon alpha/beta receptor 1 (IFNAR1) from Ovis aries (Sheep).